We begin with the raw amino-acid sequence, 442 residues long: 26S proteasome non-ATPase regulatory subunit 12 homolog B (442 aa).

A coiled-coil region spans residues 1 to 129 (MEESRQLESS…KEEQGLIAEA (129 aa)). In terms of domain architecture, PCI spans 232–403 (EICRSYKAIY…GIICFQIVKD (172 aa)).

Belongs to the proteasome subunit p55 family. As to quaternary structure, component of the 19S regulatory particle (RP/PA700) lid subcomplex of the 26S proteasome. The 26S proteasome is composed of a core protease (CP), known as the 20S proteasome, capped at one or both ends by the 19S regulatory particle (RP/PA700). The RP/PA700 complex is composed of at least 17 different subunits in two subcomplexes, the base and the lid, which form the portions proximal and distal to the 20S proteolytic core, respectively. Ubiquitous with highest expression in flowers.

The protein resides in the cytoplasm. Its subcellular location is the nucleus. Its function is as follows. Acts as a regulatory subunit of the 26 proteasome which is involved in the ATP-dependent degradation of ubiquitinated proteins. Acts redundantly with RPN5A. The sequence is that of 26S proteasome non-ATPase regulatory subunit 12 homolog B (RPN5B) from Arabidopsis thaliana (Mouse-ear cress).